We begin with the raw amino-acid sequence, 273 residues long: uncharacterized protein (273 aa).

This is an uncharacterized protein from Acheta domesticus (House cricket).